A 422-amino-acid polypeptide reads, in one-letter code: AP-1 complex subunit mu-1-I (422 aa).

The MHD domain occupies 167-420 (KNEVFLDVIE…ITQNGEYEMR (254 aa)).

The protein belongs to the adaptor complexes medium subunit family. Adaptor protein complex 1 (AP-1) is a heterotetramer composed of two large adaptins (gamma- and beta'-type subunits), a medium adaptin (mu-type subunit AP47) and a small adaptin (sigma-type subunit AP19). Interacts (via N-terminus) with kvs-4. In terms of tissue distribution, expressed in the cholinergic motor neuron DA9.

The protein localises to the golgi apparatus. It is found in the cytoplasmic vesicle. It localises to the clathrin-coated vesicle membrane. Its subcellular location is the cell projection. The protein resides in the dendrite. Its function is as follows. Component of the adaptor complexes which link clathrin to receptors in coated vesicles. Clathrin-associated protein complexes are believed to interact with the cytoplasmic tails of membrane proteins, leading to their selection and concentration. Required for many aspects of development and behavior, including negative regulation of vulval differentiation. Required for the dendritic localization of potassium channel kvs-4 in the cholinergic motor neuron DA9. The chain is AP-1 complex subunit mu-1-I (unc-101) from Caenorhabditis elegans.